The primary structure comprises 532 residues: Membrane protein insertase YidC (532 aa).

5 consecutive transmembrane segments (helical) span residues Phe7–Met27, Leu336–Ile356, Gly413–Ile433, Leu450–Ile470, and Pro492–Ile512.

It belongs to the OXA1/ALB3/YidC family. Type 1 subfamily. In terms of assembly, interacts with the Sec translocase complex via SecD. Specifically interacts with transmembrane segments of nascent integral membrane proteins during membrane integration.

The protein resides in the cell membrane. Its function is as follows. Required for the insertion and/or proper folding and/or complex formation of integral membrane proteins into the membrane. Involved in integration of membrane proteins that insert both dependently and independently of the Sec translocase complex, as well as at least some lipoproteins. Aids folding of multispanning membrane proteins. The sequence is that of Membrane protein insertase YidC from Buchnera aphidicola subsp. Acyrthosiphon pisum (strain Tuc7).